A 511-amino-acid chain; its full sequence is Probable dolichyl pyrophosphate Glc1Man9GlcNAc2 alpha-1,3-glucosyltransferase (511 aa).

A run of 11 helical transmembrane segments spans residues 4 to 24, 94 to 112, 124 to 144, 151 to 171, 210 to 230, 300 to 320, 332 to 352, 356 to 370, 377 to 394, 432 to 452, and 469 to 491; these read LFWHLVGIATGLKILLIPAYH, VYFQRLSVIVTDLVYVLGV, DTQQFFAASMLLLLNVGLIFV, YNGLLFGILLLSIGSLIRQRF, VVSAVGAVVKLLVVGLTPFAV, PAITPPVTFALTALFMLPILV, LVFLRAVVLCGCSSFVFGWHV, AILMVLLPLCLLTLV, YAYVLGIAGYFSLFPLLF, WLYMLGFMAIPLYEHLLSFLL, and YSALGVLYFFGAYYLYALGISWG.

The protein belongs to the ALG6/ALG8 glucosyltransferase family.

The protein resides in the endoplasmic reticulum membrane. It carries out the reaction an alpha-D-Glc-(1-&gt;3)-alpha-D-Man-(1-&gt;2)-alpha-D-Man-(1-&gt;2)-alpha-D-Man-(1-&gt;3)-[alpha-D-Man-(1-&gt;2)-alpha-D-Man-(1-&gt;3)-[alpha-D-Man-(1-&gt;2)-alpha-D-Man-(1-&gt;6)]-alpha-D-Man-(1-&gt;6)]-beta-D-Man-(1-&gt;4)-beta-D-GlcNAc-(1-&gt;4)-alpha-D-GlcNAc-diphospho-di-trans,poly-cis-dolichol + a di-trans,poly-cis-dolichyl beta-D-glucosyl phosphate = an alpha-D-Glc-(1-&gt;3)-alpha-D-Glc-(1-&gt;3)-alpha-D-Man-(1-&gt;2)-alpha-D-Man-(1-&gt;2)-alpha-D-Man-(1-&gt;3)-[alpha-D-Man-(1-&gt;2)-alpha-D-Man-(1-&gt;3)-[alpha-D-Man-(1-&gt;2)-alpha-D-Man-(1-&gt;6)]-alpha-D-Man-(1-&gt;6)]-beta-D-Man-(1-&gt;4)-beta-D-GlcNAc-(1-&gt;4)-alpha-D-GlcNAc-diphospho-di-trans,poly-cis-dolichol + a di-trans,poly-cis-dolichyl phosphate + H(+). The protein operates within protein modification; protein glycosylation. Its function is as follows. Adds the second glucose residue to the lipid-linked oligosaccharide precursor for N-linked glycosylation. Transfers glucose from dolichyl phosphate glucose (Dol-P-Glc) onto the lipid-linked oligosaccharide Glc(1)Man(9)GlcNAc(2)-PP-Dol. Functions in developmental processes such as germband extension, the apical constriction of mesoderm precursor cells and ventral furrow formation in early embryogenesis prior to gastrulation. Involved in the glycosylation and intracellular distribution of shg (E-cadherin). Function in cell intercalation in the lateral epidermis during germband extension may be due to its effect on shg. The polypeptide is Probable dolichyl pyrophosphate Glc1Man9GlcNAc2 alpha-1,3-glucosyltransferase (Drosophila melanogaster (Fruit fly)).